The chain runs to 401 residues: NADH-ubiquinone oxidoreductase 49 kDa subunit (401 aa).

The protein belongs to the complex I 49 kDa subunit family.

The protein resides in the mitochondrion. It catalyses the reaction a ubiquinone + NADH + 5 H(+)(in) = a ubiquinol + NAD(+) + 4 H(+)(out). Its function is as follows. Core subunit of the mitochondrial membrane respiratory chain NADH dehydrogenase (Complex I) that is believed to belong to the minimal assembly required for catalysis. Complex I functions in the transfer of electrons from NADH to the respiratory chain. The immediate electron acceptor for the enzyme is believed to be ubiquinone. Component of the iron-sulfur (IP) fragment of the enzyme. The sequence is that of NADH-ubiquinone oxidoreductase 49 kDa subunit (NAD7) from Acanthamoeba castellanii (Amoeba).